The primary structure comprises 1078 residues: MARQPLVSSVLVIGSGPIVIGQAAEFDYSGSQALRALREEGIRTIIVNSNPATIMTDEDMADAVYIEPLTVEVLERIIARERPEGLLATLGGQTGLNLAVALAEAGVLDRYGVRLLGTPLEAIRRAEDRQLFKELLLEIGEPVLESLTAYSVEDALRFAEEVPPPLIVRPAFTLGGTGGGIAFSEDELVTLVQRGIAASPIGQVLVERSLLGWKEIEYEVMRDANDTCITICNIENLDPMGVHTGDSIVVAPSQTLSDRDYQMLRSAALKIIRALGIVGGCNIQFALDPRSDQYYVIEVNPRVSRSSALASKATGYPIARIAAKLAIGRTLDEIPNPVTGKTMASFEPALDYCVVKIPRWPFDKFRHGDRRLGSQMKATGEVMAIDRCFEAALQKAVRGLETDQTDLTWEDSRWQDPSALEQALRIPTDQRLWAVAAALRRGWTPEHVSALSGIDTWFVRAIQRLVEMEQRLASEPLTAELLWEAKRLGFADRTIAALRTTTEQEIRAQRLALGLAPVYKLVDTCAAEFAAETPYFYATYEDENEAPPLDSPKAVVIGAGPIRIGQGIEFDYCSVKAAQALHRAGVAAIMLNNNPETVSTDFDASDRLYVTPLDAESVLDVLRHEASSQYDQLPPVIVQFGGQTAINLAADLAAAGVPILGTDQDAIDLAEDRRRFERFLHELGIPQPPGAGVTTLEEALETAERIGYPVLVRPSYVLGGRAMEVVYRREHLEQYLATSGAFASGRPVLIDKYLDGIELEVDALCDGHEVLVPGIMQHIERAGVHSGDSFAVYPAVELPSVHVDTLVRYTTEIALALAARGLINIQFVLHQGVVYVLEVNPRASRTVPFLSKVTGVPMVDVATQILLGRSLGDQGYRGGLWPRQPLVAVKAPVFSMAKLQGVDVQLGPEMKSTGEAMGIDRTFEAALAKAFLAAGLAIERGAPVLLSLADNDKSAGVELARGLLALGHPLVATEGTARYLRAHGVPVELTVAHIGHGHPDVLEVILERKVRGVINTPGRDEGTIQDGFLIRRAAVERGIPCLTSLDTARALVRALLGGGTSFSVQPLPAYRTREAVLA.

The segment at 1 to 401 (MARQPLVSSV…ALQKAVRGLE (401 aa)) is carboxyphosphate synthetic domain. Residues arginine 129, arginine 169, glycine 175, glycine 176, arginine 208, leucine 210, glutamate 215, glycine 241, valine 242, histidine 243, glutamine 284, and glutamate 298 each contribute to the ATP site. In terms of domain architecture, ATP-grasp 1 spans 133 to 327 (KELLLEIGEP…IARIAAKLAI (195 aa)). Residues glutamine 284, glutamate 298, and asparagine 300 each contribute to the Mg(2+) site. Mn(2+) is bound by residues glutamine 284, glutamate 298, and asparagine 300. An oligomerization domain region spans residues 402–546 (TDQTDLTWED…YATYEDENEA (145 aa)). The segment at 547-935 (PPLDSPKAVV…ALAKAFLAAG (389 aa)) is carbamoyl phosphate synthetic domain. The region spanning 677–867 (ERFLHELGIP…MVDVATQILL (191 aa)) is the ATP-grasp 2 domain. ATP is bound by residues arginine 713, lysine 752, leucine 754, glutamate 758, glycine 783, valine 784, histidine 785, serine 786, glutamine 826, and glutamate 838. 3 residues coordinate Mg(2+): glutamine 826, glutamate 838, and asparagine 840. Mn(2+) contacts are provided by glutamine 826, glutamate 838, and asparagine 840. In terms of domain architecture, MGS-like spans 936-1078 (LAIERGAPVL…AYRTREAVLA (143 aa)). The interval 936-1078 (LAIERGAPVL…AYRTREAVLA (143 aa)) is allosteric domain.

This sequence belongs to the CarB family. In terms of assembly, composed of two chains; the small (or glutamine) chain promotes the hydrolysis of glutamine to ammonia, which is used by the large (or ammonia) chain to synthesize carbamoyl phosphate. Tetramer of heterodimers (alpha,beta)4. Requires Mg(2+) as cofactor. Mn(2+) is required as a cofactor.

It carries out the reaction hydrogencarbonate + L-glutamine + 2 ATP + H2O = carbamoyl phosphate + L-glutamate + 2 ADP + phosphate + 2 H(+). The catalysed reaction is hydrogencarbonate + NH4(+) + 2 ATP = carbamoyl phosphate + 2 ADP + phosphate + 2 H(+). It functions in the pathway amino-acid biosynthesis; L-arginine biosynthesis; carbamoyl phosphate from bicarbonate: step 1/1. It participates in pyrimidine metabolism; UMP biosynthesis via de novo pathway; (S)-dihydroorotate from bicarbonate: step 1/3. Large subunit of the glutamine-dependent carbamoyl phosphate synthetase (CPSase). CPSase catalyzes the formation of carbamoyl phosphate from the ammonia moiety of glutamine, carbonate, and phosphate donated by ATP, constituting the first step of 2 biosynthetic pathways, one leading to arginine and/or urea and the other to pyrimidine nucleotides. The large subunit (synthetase) binds the substrates ammonia (free or transferred from glutamine from the small subunit), hydrogencarbonate and ATP and carries out an ATP-coupled ligase reaction, activating hydrogencarbonate by forming carboxy phosphate which reacts with ammonia to form carbamoyl phosphate. The polypeptide is Carbamoyl phosphate synthase large chain (Thermomicrobium roseum (strain ATCC 27502 / DSM 5159 / P-2)).